Reading from the N-terminus, the 325-residue chain is Coiled-coil domain-containing protein 130 homolog (325 aa).

Residues 156–262 adopt a coiled-coil conformation; it reads LKLENKKLDI…KLKRELIKNE (107 aa).

This sequence belongs to the CWC16 family.

This is Coiled-coil domain-containing protein 130 homolog from Dictyostelium discoideum (Social amoeba).